A 350-amino-acid chain; its full sequence is S-adenosylmethionine:tRNA ribosyltransferase-isomerase (350 aa).

It belongs to the QueA family. As to quaternary structure, monomer.

It is found in the cytoplasm. The enzyme catalyses 7-aminomethyl-7-carbaguanosine(34) in tRNA + S-adenosyl-L-methionine = epoxyqueuosine(34) in tRNA + adenine + L-methionine + 2 H(+). It participates in tRNA modification; tRNA-queuosine biosynthesis. Transfers and isomerizes the ribose moiety from AdoMet to the 7-aminomethyl group of 7-deazaguanine (preQ1-tRNA) to give epoxyqueuosine (oQ-tRNA). This Bacillus thuringiensis subsp. konkukian (strain 97-27) protein is S-adenosylmethionine:tRNA ribosyltransferase-isomerase.